Here is a 158-residue protein sequence, read N- to C-terminus: Crossover junction endodeoxyribonuclease RuvC (158 aa).

Catalysis depends on residues aspartate 7, glutamate 66, and aspartate 139. Mg(2+) contacts are provided by aspartate 7, glutamate 66, and aspartate 139.

Belongs to the RuvC family. In terms of assembly, homodimer which binds Holliday junction (HJ) DNA. The HJ becomes 2-fold symmetrical on binding to RuvC with unstacked arms; it has a different conformation from HJ DNA in complex with RuvA. In the full resolvosome a probable DNA-RuvA(4)-RuvB(12)-RuvC(2) complex forms which resolves the HJ. It depends on Mg(2+) as a cofactor.

The protein resides in the cytoplasm. The catalysed reaction is Endonucleolytic cleavage at a junction such as a reciprocal single-stranded crossover between two homologous DNA duplexes (Holliday junction).. In terms of biological role, the RuvA-RuvB-RuvC complex processes Holliday junction (HJ) DNA during genetic recombination and DNA repair. Endonuclease that resolves HJ intermediates. Cleaves cruciform DNA by making single-stranded nicks across the HJ at symmetrical positions within the homologous arms, yielding a 5'-phosphate and a 3'-hydroxyl group; requires a central core of homology in the junction. The consensus cleavage sequence is 5'-(A/T)TT(C/G)-3'. Cleavage occurs on the 3'-side of the TT dinucleotide at the point of strand exchange. HJ branch migration catalyzed by RuvA-RuvB allows RuvC to scan DNA until it finds its consensus sequence, where it cleaves and resolves the cruciform DNA. The protein is Crossover junction endodeoxyribonuclease RuvC of Campylobacter hominis (strain ATCC BAA-381 / DSM 21671 / CCUG 45161 / LMG 19568 / NCTC 13146 / CH001A).